A 423-amino-acid polypeptide reads, in one-letter code: MLDVKMMRQNFDEVKAKLQTRGVKEEILVEFLRLDESRRDLLVKVEEMKKYRNDVSAEIAQLKRNKEDATAKIAEMKEVGGNIKALDAEINAIDEELRGITTTLPNLPDDSVPVGAGEEENVEVRRWSEPRTFAFEPKPHWEVAENLGILDFERGAKVAGSRFVYYKGLGARLERALYNFMLDLHVYEHGYTEMITPYIVNDTAMFGTGQFPKFKEDVFQLQDTDLTLIPTAEVPLTNYYNNEILDGKDLPIYFTALSPSFRSEAGSAGRDTRGLIRLHQFNKVEMVKFSDAEHSYEELEKMTNNAEEILQKLGLPYRVMALSTGDMGFSAAKTYDLEVWIPAQETYREISSCSNCEDFQARRAMIRYRDENDKVQYAHTLNGSGLAVGRTVAAILENYQNEDGSVTVPEVLVPYMGNLTVIK.

231-233 contributes to the L-serine binding site; the sequence is TAE. 262-264 is an ATP binding site; the sequence is RSE. E285 contacts L-serine. Position 349–352 (349–352) interacts with ATP; the sequence is EISS. S384 contributes to the L-serine binding site.

It belongs to the class-II aminoacyl-tRNA synthetase family. Type-1 seryl-tRNA synthetase subfamily. Homodimer. The tRNA molecule binds across the dimer.

It is found in the cytoplasm. The catalysed reaction is tRNA(Ser) + L-serine + ATP = L-seryl-tRNA(Ser) + AMP + diphosphate + H(+). It catalyses the reaction tRNA(Sec) + L-serine + ATP = L-seryl-tRNA(Sec) + AMP + diphosphate + H(+). It participates in aminoacyl-tRNA biosynthesis; selenocysteinyl-tRNA(Sec) biosynthesis; L-seryl-tRNA(Sec) from L-serine and tRNA(Sec): step 1/1. Catalyzes the attachment of serine to tRNA(Ser). Is also able to aminoacylate tRNA(Sec) with serine, to form the misacylated tRNA L-seryl-tRNA(Sec), which will be further converted into selenocysteinyl-tRNA(Sec). The polypeptide is Serine--tRNA ligase 2 (Enterococcus faecalis (strain ATCC 700802 / V583)).